Reading from the N-terminus, the 188-residue chain is Cell division protein SepF (188 aa).

The segment covering 152-162 has biased composition (polar residues); it reads TSHDEASTPTV. Residues 152-188 form a disordered region; the sequence is TSHDEASTPTVVSRDAEAEQQQEAAAAPSPAWGATAL.

The protein belongs to the SepF family. As to quaternary structure, homodimer. Interacts with FtsZ.

The protein resides in the cytoplasm. Functionally, cell division protein that is part of the divisome complex and is recruited early to the Z-ring. Probably stimulates Z-ring formation, perhaps through the cross-linking of FtsZ protofilaments. Its function overlaps with FtsA. This is Cell division protein SepF from Parasynechococcus marenigrum (strain WH8102).